We begin with the raw amino-acid sequence, 126 residues long: Large ribosomal subunit protein bL19 (126 aa).

The protein belongs to the bacterial ribosomal protein bL19 family.

In terms of biological role, this protein is located at the 30S-50S ribosomal subunit interface and may play a role in the structure and function of the aminoacyl-tRNA binding site. The sequence is that of Large ribosomal subunit protein bL19 from Prochlorococcus marinus (strain MIT 9312).